Consider the following 23-residue polypeptide: NADP phosphatase 2 (23 aa).

As to quaternary structure, homodimer.

The protein localises to the cytoplasm. The polypeptide is NADP phosphatase 2 (Arthrobacter sp. (strain KM)).